The chain runs to 642 residues: 2-oxoacid:ferredoxin oxidoreductase 2, subunit alpha (642 aa).

The YPITP motif signature appears at 263–267 (YPITP). Substrate is bound by residues Thr-266 and Arg-356.

As to quaternary structure, heterodimer composed of an alpha and a beta subunit.

The enzyme catalyses a 2-oxocarboxylate + 2 oxidized [2Fe-2S]-[ferredoxin] + CoA = an acyl-CoA + 2 reduced [2Fe-2S]-[ferredoxin] + CO2 + H(+). Its function is as follows. Catalyzes the coenzyme A-dependent oxidative decarboxylation of different 2-oxoacids such as pyruvate, 2-oxobutyrate, glyoxylate and 2-oxoglutarate to form their CoA derivatives. This chain is 2-oxoacid:ferredoxin oxidoreductase 2, subunit alpha, found in Aeropyrum pernix (strain ATCC 700893 / DSM 11879 / JCM 9820 / NBRC 100138 / K1).